Consider the following 339-residue polypeptide: tRNA-dihydrouridine(20/20a) synthase (339 aa).

Residues 26-28 (PML) and Gln-78 each bind FMN. Cys-108 acts as the Proton donor in catalysis. FMN contacts are provided by residues Lys-147, His-180, 220–222 (NGG), and 242–243 (GR).

This sequence belongs to the Dus family. DusA subfamily. The cofactor is FMN.

The catalysed reaction is 5,6-dihydrouridine(20) in tRNA + NADP(+) = uridine(20) in tRNA + NADPH + H(+). It carries out the reaction 5,6-dihydrouridine(20) in tRNA + NAD(+) = uridine(20) in tRNA + NADH + H(+). The enzyme catalyses 5,6-dihydrouridine(20a) in tRNA + NADP(+) = uridine(20a) in tRNA + NADPH + H(+). It catalyses the reaction 5,6-dihydrouridine(20a) in tRNA + NAD(+) = uridine(20a) in tRNA + NADH + H(+). Catalyzes the synthesis of 5,6-dihydrouridine (D), a modified base found in the D-loop of most tRNAs, via the reduction of the C5-C6 double bond in target uridines. Specifically modifies U20 and U20a in tRNAs. The chain is tRNA-dihydrouridine(20/20a) synthase from Shigella flexneri.